Here is a 795-residue protein sequence, read N- to C-terminus: Phenylalanine--tRNA ligase beta subunit (795 aa).

A tRNA-binding domain is found at 39 to 148 (AAKFNGVLVG…SDAPVGTDLR (110 aa)). Residues 401-476 (PKVTEVRLRR…RVYGYNSIPN (76 aa)) form the B5 domain. Mg(2+)-binding residues include D454, D460, E463, and E464. Residues 701–794 (SKFPSNRRDI…LAEQFNASLR (94 aa)) form the FDX-ACB domain.

This sequence belongs to the phenylalanyl-tRNA synthetase beta subunit family. Type 1 subfamily. Tetramer of two alpha and two beta subunits. Mg(2+) serves as cofactor.

The protein resides in the cytoplasm. It carries out the reaction tRNA(Phe) + L-phenylalanine + ATP = L-phenylalanyl-tRNA(Phe) + AMP + diphosphate + H(+). This Pseudoalteromonas translucida (strain TAC 125) protein is Phenylalanine--tRNA ligase beta subunit.